A 149-amino-acid chain; its full sequence is D-aminoacyl-tRNA deacylase (149 aa).

Residues 137–138 (GP) carry the Gly-cisPro motif, important for rejection of L-amino acids motif.

This sequence belongs to the DTD family. Homodimer.

Its subcellular location is the cytoplasm. The catalysed reaction is glycyl-tRNA(Ala) + H2O = tRNA(Ala) + glycine + H(+). It carries out the reaction a D-aminoacyl-tRNA + H2O = a tRNA + a D-alpha-amino acid + H(+). Its function is as follows. An aminoacyl-tRNA editing enzyme that deacylates mischarged D-aminoacyl-tRNAs. Also deacylates mischarged glycyl-tRNA(Ala), protecting cells against glycine mischarging by AlaRS. Acts via tRNA-based rather than protein-based catalysis; rejects L-amino acids rather than detecting D-amino acids in the active site. By recycling D-aminoacyl-tRNA to D-amino acids and free tRNA molecules, this enzyme counteracts the toxicity associated with the formation of D-aminoacyl-tRNA entities in vivo and helps enforce protein L-homochirality. The chain is D-aminoacyl-tRNA deacylase from Clostridium beijerinckii (strain ATCC 51743 / NCIMB 8052) (Clostridium acetobutylicum).